We begin with the raw amino-acid sequence, 520 residues long: GMP synthase [glutamine-hydrolyzing] (520 aa).

One can recognise a Glutamine amidotransferase type-1 domain in the interval 9–202 (KILILDFGSQ…VRKICGCSGK (194 aa)). Catalysis depends on Cys-86, which acts as the Nucleophile. Residues His-176 and Glu-178 contribute to the active site. The 193-residue stretch at 203-395 (WTPGQIIEDA…LGLPHQMVWR (193 aa)) folds into the GMPS ATP-PPase domain. 230 to 236 (SGGVDSS) serves as a coordination point for ATP.

In terms of assembly, homodimer.

The enzyme catalyses XMP + L-glutamine + ATP + H2O = GMP + L-glutamate + AMP + diphosphate + 2 H(+). It functions in the pathway purine metabolism; GMP biosynthesis; GMP from XMP (L-Gln route): step 1/1. Its function is as follows. Catalyzes the synthesis of GMP from XMP. This chain is GMP synthase [glutamine-hydrolyzing], found in Geotalea daltonii (strain DSM 22248 / JCM 15807 / FRC-32) (Geobacter daltonii).